Here is a 149-residue protein sequence, read N- to C-terminus: UPF0179 protein MA_3685 (149 aa).

It belongs to the UPF0179 family.

The chain is UPF0179 protein MA_3685 from Methanosarcina acetivorans (strain ATCC 35395 / DSM 2834 / JCM 12185 / C2A).